The following is a 143-amino-acid chain: uncharacterized protein (143 aa).

The protein localises to the cytoplasm. Its subcellular location is the nucleus. This is an uncharacterized protein from Schizosaccharomyces pombe (strain 972 / ATCC 24843) (Fission yeast).